The chain runs to 333 residues: Adenosine deaminase (333 aa).

Zn(2+) contacts are provided by H12 and H14. Residues H14, D16, and G170 each coordinate substrate. Position 197 (H197) interacts with Zn(2+). The active-site Proton donor is the E200. Position 278 (D278) interacts with Zn(2+). D279 contributes to the substrate binding site.

The protein belongs to the metallo-dependent hydrolases superfamily. Adenosine and AMP deaminases family. Adenosine deaminase subfamily. Requires Zn(2+) as cofactor.

It catalyses the reaction adenosine + H2O + H(+) = inosine + NH4(+). The catalysed reaction is 2'-deoxyadenosine + H2O + H(+) = 2'-deoxyinosine + NH4(+). In terms of biological role, catalyzes the hydrolytic deamination of adenosine and 2-deoxyadenosine. This chain is Adenosine deaminase, found in Klebsiella pneumoniae (strain 342).